We begin with the raw amino-acid sequence, 167 residues long: Protein DLS1 (167 aa).

Ser-17 bears the Phosphoserine mark.

As to quaternary structure, component of the ISW2 complex, which at least consists of ISW2, ITC1, DLS1 and DPB4.

It is found in the nucleus. Functionally, functions as a component of the ISW2 complex, which acts in remodeling the chromatin by catalyzing an ATP-dependent alteration in the structure of nucleosomal DNA. The ISW2 complex is involved in coordinating transcriptional repression and in inheritance of telomeric silencing. It is involved in repression of MAT a-specific genes, INO1, and early meiotic genes during mitotic growth dependent upon transcription factor UME6 and in a parallel pathway to the RPD3-SIN3 histone deacetylase complex. DLS1 is partially required for the ISW2 complex chromatin remodeling activity and is not required for its interaction with chromatin. This chain is Protein DLS1 (DLS1), found in Saccharomyces cerevisiae (strain ATCC 204508 / S288c) (Baker's yeast).